The primary structure comprises 294 residues: Tryptophan 2,3-dioxygenase 1 (294 aa).

The disordered stretch occupies residues 1 to 20 (MSEPIQPTRPAASGCPMHGA). Residues 63 to 67 (FIVQH), Tyr-125, and Arg-129 contribute to the substrate site. His-252 provides a ligand contact to heme. Thr-266 contributes to the substrate binding site.

Belongs to the tryptophan 2,3-dioxygenase family. In terms of assembly, homotetramer. Heme serves as cofactor.

It carries out the reaction L-tryptophan + O2 = N-formyl-L-kynurenine. It participates in amino-acid degradation; L-tryptophan degradation via kynurenine pathway; L-kynurenine from L-tryptophan: step 1/2. Its function is as follows. Heme-dependent dioxygenase that catalyzes the oxidative cleavage of the L-tryptophan (L-Trp) pyrrole ring and converts L-tryptophan to N-formyl-L-kynurenine. Catalyzes the oxidative cleavage of the indole moiety. In Ralstonia nicotianae (strain ATCC BAA-1114 / GMI1000) (Ralstonia solanacearum), this protein is Tryptophan 2,3-dioxygenase 1.